The sequence spans 303 residues: Probable cell division protein WhiA (303 aa).

Residues 272 to 303 (SIQQIADSLETPLSKSGVNHRLRKINKIADEL) constitute a DNA-binding region (H-T-H motif).

Belongs to the WhiA family.

In terms of biological role, involved in cell division and chromosome segregation. The polypeptide is Probable cell division protein WhiA (Streptococcus agalactiae serotype Ia (strain ATCC 27591 / A909 / CDC SS700)).